Here is a 232-residue protein sequence, read N- to C-terminus: Large ribosomal subunit protein uL1 (232 aa).

The protein belongs to the universal ribosomal protein uL1 family. In terms of assembly, part of the 50S ribosomal subunit.

In terms of biological role, binds directly to 23S rRNA. The L1 stalk is quite mobile in the ribosome, and is involved in E site tRNA release. Protein L1 is also a translational repressor protein, it controls the translation of the L11 operon by binding to its mRNA. This is Large ribosomal subunit protein uL1 from Ruegeria pomeroyi (strain ATCC 700808 / DSM 15171 / DSS-3) (Silicibacter pomeroyi).